A 324-amino-acid polypeptide reads, in one-letter code: UDP-galactose transporter homolog 1 (324 aa).

Transmembrane regions (helical) follow at residues 7-27 (LVIAVCGIYATFLTWSLAQEP) and 42-62 (HSSFIVLCQALTAAVVGLCYL). N-linked (GlcNAc...) asparagine glycosylation occurs at asparagine 97. The next 7 helical transmembrane spans lie at 106–126 (VGYMLAKSCKLLPIMLVHVLV), 135–155 (KALVGVLVSGGVALFTLGGAE), 161–181 (ASLYGLGMLLVSLFLDGLTNA), 199–219 (HLMVALNTAIVLWNLAYLVLF), 237–257 (ILTYLFTYCACGALGQCFVFF), 265–285 (LVLATVTVTRKMVSMLLSIVV), and 290–310 (VRPVQWLGILVVFGGIIWETV).

This sequence belongs to the nucleotide-sugar transporter family. SLC35B subfamily.

It localises to the endoplasmic reticulum membrane. May be involved in specific transport of UDP-Gal from the cytosol to the Golgi lumen. Involved in the maintenance of optimal conditions for the folding of secretory pathway proteins in the endoplasmic reticulum. The sequence is that of UDP-galactose transporter homolog 1 (HUT1) from Eremothecium gossypii (strain ATCC 10895 / CBS 109.51 / FGSC 9923 / NRRL Y-1056) (Yeast).